The sequence spans 345 residues: DNA-directed RNA polymerases I and III subunit rpac1 (345 aa).

Residues 1–11 (MVNKSTTNGVS) are compositionally biased toward polar residues. Residues 1–20 (MVNKSTTNGVSDPNLENKRT) are disordered.

The protein belongs to the archaeal Rpo3/eukaryotic RPB3 RNA polymerase subunit family. As to quaternary structure, component of the RNA polymerase I (Pol I) and RNA polymerase III (Pol III) complexes consisting of at least 13 and 17 subunits, respectively. Interacts with RPAC19/RPAC2.

It localises to the nucleus. Its function is as follows. DNA-dependent RNA polymerase catalyzes the transcription of DNA into RNA using the four ribonucleoside triphosphates as substrates. Common component of RNA polymerases I and III which synthesize ribosomal RNA precursors and small RNAs, such as 5S rRNA and tRNAs, respectively. RPAC1 is part of the Pol core element with the central large cleft and probably a clamp element that moves to open and close the cleft. In Dictyostelium discoideum (Social amoeba), this protein is DNA-directed RNA polymerases I and III subunit rpac1 (polr1c).